Reading from the N-terminus, the 72-residue chain is UPF0270 protein PM1156 (72 aa).

Belongs to the UPF0270 family.

In Pasteurella multocida (strain Pm70), this protein is UPF0270 protein PM1156.